Here is a 106-residue protein sequence, read N- to C-terminus: Small ribosomal subunit protein bS16 (106 aa).

Belongs to the bacterial ribosomal protein bS16 family.

The protein is Small ribosomal subunit protein bS16 of Wolbachia pipientis wMel.